The sequence spans 489 residues: Mitochondrial-processing peptidase subunit beta (489 aa).

A mitochondrion-targeting transit peptide spans 1-45; that stretch reads MAAAAARVVLLPAARRRLWGFSESLLIRGAAGRSSYFGENRLRST. His-101 contacts Zn(2+). The Proton acceptor role is filled by Glu-104. Zn(2+)-binding residues include His-105 and Glu-181.

Belongs to the peptidase M16 family. Heterodimer of PMPCA (alpha) and PMPCB (beta) subunits, forming the mitochondrial processing protease (MPP) in which PMPCA is involved in substrate recognition and binding and PMPCB is the catalytic subunit. It depends on Zn(2+) as a cofactor.

The protein localises to the mitochondrion matrix. It catalyses the reaction Release of N-terminal transit peptides from precursor proteins imported into the mitochondrion, typically with Arg in position P2.. Binding to PMPCA is required for catalytic activity. Its function is as follows. Catalytic subunit of the essential mitochondrial processing protease (MPP), which cleaves the mitochondrial sequence off newly imported precursors proteins. Preferentially, cleaves after an arginine at position P2. Required for PINK1 turnover by coupling PINK1 mitochondrial import and cleavage, which results in subsequent PINK1 proteolysis. The protein is Mitochondrial-processing peptidase subunit beta (PMPCB) of Pongo abelii (Sumatran orangutan).